The primary structure comprises 508 residues: Photosystem II CP47 reaction center protein (508 aa).

6 helical membrane-spanning segments follow: residues 21 to 36 (SVHIMHTALVAGWAGS), 101 to 115 (IVFSGLCFLAAIWHW), 140 to 156 (GIHLFLSGVACFGFGAF), 203 to 218 (IAAGTLGILAGLFHLS), 237 to 252 (VLSSSIAAVFFAAFVV), and 457 to 472 (SFALLFFFGHIWHGAR).

This sequence belongs to the PsbB/PsbC family. PsbB subfamily. As to quaternary structure, PSII is composed of 1 copy each of membrane proteins PsbA, PsbB, PsbC, PsbD, PsbE, PsbF, PsbH, PsbI, PsbJ, PsbK, PsbL, PsbM, PsbT, PsbX, PsbY, PsbZ, Psb30/Ycf12, at least 3 peripheral proteins of the oxygen-evolving complex and a large number of cofactors. It forms dimeric complexes. Binds multiple chlorophylls. PSII binds additional chlorophylls, carotenoids and specific lipids. serves as cofactor.

The protein resides in the plastid. It is found in the chloroplast thylakoid membrane. Its function is as follows. One of the components of the core complex of photosystem II (PSII). It binds chlorophyll and helps catalyze the primary light-induced photochemical processes of PSII. PSII is a light-driven water:plastoquinone oxidoreductase, using light energy to abstract electrons from H(2)O, generating O(2) and a proton gradient subsequently used for ATP formation. This chain is Photosystem II CP47 reaction center protein, found in Lemna minor (Common duckweed).